A 571-amino-acid chain; its full sequence is MSERYSGPLVVEGKLADAERLKQESHYLRGTIAEDLNDGLTGGFNGDNFLLIRFHGMYQQDDRDIRAERAEQKLEPRHAMMLRCRLPGGVMTPQQWLGIDKFAGENTLYGSIRITNRQTFQFHGILKSDLKSAHQLLHELGLDALATANDVNRNVLCTSNPVESELHSQAYEWAKRISEHLLPRTRAYAEIWLDQEKVAATDEEPILGPTYLPRKFKTTVVIPPQNDVDLHANDMNFVAIADNGRLVGFNVLVGGGLSIAHGDKATYPRTASELGYISVDHTLAIAEAVVTTQRDWGNRTNRKNAKTKYTLERVGIDTFRQEVERRAGVTFEPVRPYEFTGRGDRIGWVKGIDKKWHLTLFIENGRILDYPGRPLKTGMAEIAKIHKGDFRLTANQNLIVAGVASRDKASIEALARQYALMDDSVTEQRKNSMACVSLPTCPLAMAEAERFLPQFVTEVEAIMRNHGVGDEHIVLRVTGCPNGCGRALLAEIGLVGKAIGRYNLHLGGNREGTRIPRMYRENITEAEILREIDALVGRWAAERQPDEGFGDFAIRAGIVRPVLDPAVDFYD.

Residues cysteine 435, cysteine 441, cysteine 480, and cysteine 484 each coordinate [4Fe-4S] cluster. Cysteine 484 provides a ligand contact to siroheme.

The protein belongs to the nitrite and sulfite reductase 4Fe-4S domain family. As to quaternary structure, alpha(8)-beta(8). The alpha component is a flavoprotein, the beta component is a hemoprotein. It depends on siroheme as a cofactor. [4Fe-4S] cluster is required as a cofactor.

The enzyme catalyses hydrogen sulfide + 3 NADP(+) + 3 H2O = sulfite + 3 NADPH + 4 H(+). It functions in the pathway sulfur metabolism; hydrogen sulfide biosynthesis; hydrogen sulfide from sulfite (NADPH route): step 1/1. Component of the sulfite reductase complex that catalyzes the 6-electron reduction of sulfite to sulfide. This is one of several activities required for the biosynthesis of L-cysteine from sulfate. The polypeptide is Sulfite reductase [NADPH] hemoprotein beta-component (Musicola paradisiaca (strain Ech703) (Dickeya paradisiaca)).